The primary structure comprises 109 residues: Large ribosomal subunit protein uL22 (109 aa).

The protein belongs to the universal ribosomal protein uL22 family. As to quaternary structure, part of the 50S ribosomal subunit.

Its function is as follows. This protein binds specifically to 23S rRNA; its binding is stimulated by other ribosomal proteins, e.g. L4, L17, and L20. It is important during the early stages of 50S assembly. It makes multiple contacts with different domains of the 23S rRNA in the assembled 50S subunit and ribosome. The globular domain of the protein is located near the polypeptide exit tunnel on the outside of the subunit, while an extended beta-hairpin is found that lines the wall of the exit tunnel in the center of the 70S ribosome. The polypeptide is Large ribosomal subunit protein uL22 (Chromobacterium violaceum (strain ATCC 12472 / DSM 30191 / JCM 1249 / CCUG 213 / NBRC 12614 / NCIMB 9131 / NCTC 9757 / MK)).